Consider the following 792-residue polypeptide: Molybdenum cofactor sulfurase (792 aa).

The residue at position 246 (K246) is an N6-(pyridoxal phosphate)lysine. The active site involves C414. In terms of domain architecture, MOSC spans 646-792; that stretch reads LRLLRQSSQR…LTCGDVVVVT (147 aa). S748 is modified (phosphoserine).

It belongs to the class-V pyridoxal-phosphate-dependent aminotransferase family. MOCOS subfamily. It depends on pyridoxal 5'-phosphate as a cofactor.

The catalysed reaction is Mo-molybdopterin + L-cysteine + AH2 = thio-Mo-molybdopterin + L-alanine + A + H2O. It functions in the pathway cofactor biosynthesis; molybdopterin biosynthesis. Sulfurates the molybdenum cofactor. Sulfation of molybdenum is essential for xanthine dehydrogenase (XDH) and aldehyde oxidase (ADO) enzymes in which molybdenum cofactor is liganded by 1 oxygen and 1 sulfur atom in active form. In Drosophila pseudoobscura pseudoobscura (Fruit fly), this protein is Molybdenum cofactor sulfurase.